Here is a 53-residue protein sequence, read N- to C-terminus: Conotoxin-like peptide 1 (53 aa).

The signal sequence occupies residues 1-18 (MGVKSALFIMAVFAAANV). Disulfide bonds link C25-C39, C32-C43, and C38-C50.

It is found in the secreted. This Orgyia pseudotsugata multicapsid polyhedrosis virus (OpMNPV) protein is Conotoxin-like peptide 1 (CTL-1).